Reading from the N-terminus, the 762-residue chain is ABC-type oligopeptide transporter ABCB9 (762 aa).

Helical transmembrane passes span 7–27, 47–67, 84–104, 116–136, 181–201, 221–241, 315–335, and 412–432; these read VVVT…IYAF, VLDL…ATIG, LVIT…LLLF, FWAL…LWGL, VAFL…ETFL, FTTA…AAGI, VFMF…FPII, and SGLT…HLVI. The region spanning 184-467 is the ABC transmembrane type-1 domain; that stretch reads LVAASFFLIV…VGSVYSGLMQ (284 aa). The 237-residue stretch at 500–736 folds into the ABC transporter domain; sequence VDFENVTFTY…GGLYAKLVQR (237 aa). An ATP-binding site is contributed by 535–542; it reads GPSGSGKS.

It belongs to the ABC transporter superfamily. ABCB family. MHC peptide exporter (TC 3.A.1.209) subfamily. As to quaternary structure, homodimer. Interacts (via TMD0 region) with LAMP1; this interaction strongly stabilizes ABCB9 and protects ABCB9 against lysosomal degradation. Interacts (via TMD0 region) with LAMP2 (isoform LAMP-2B). Interacts (via TMD0) with YIF1B; this interaction allows (but is not essential) the ER-to-Golgi trafficking and strongly depends on a salt bridge within TMD0. As to expression, highly expressed in testis, particularly in the Sertoli cells of the seminiferous tubules, and at moderate levels in brain and spinal cord.

It is found in the lysosome membrane. It carries out the reaction a [oligopeptide](in) + ATP + H2O = a [oligopeptide](out) + ADP + phosphate + H(+). ATP-dependent low-affinity peptide transporter which translocates a broad spectrum of peptides from the cytosol to the lysosomal lumen for degradation. Displays a broad peptide length specificity from 6-mer up to at least 59-mer peptides with an optimum of 23-mers. Binds and transports smaller and larger peptides with the same affinity. Favors positively charged, aromatic or hydrophobic residues in the N- and C-terminal positions whereas negatively charged residues as well as asparagine and methionine are not favored. The sequence is that of ABC-type oligopeptide transporter ABCB9 from Mus musculus (Mouse).